Here is a 214-residue protein sequence, read N- to C-terminus: tRNA (guanine-N(7)-)-methyltransferase (214 aa).

S-adenosyl-L-methionine is bound by residues glutamate 43, glutamate 68, aspartate 95, and aspartate 117. The active site involves aspartate 117. Residues lysine 121, aspartate 153, and 190-193 (TEYE) each bind substrate.

Belongs to the class I-like SAM-binding methyltransferase superfamily. TrmB family.

It catalyses the reaction guanosine(46) in tRNA + S-adenosyl-L-methionine = N(7)-methylguanosine(46) in tRNA + S-adenosyl-L-homocysteine. Its pathway is tRNA modification; N(7)-methylguanine-tRNA biosynthesis. Catalyzes the formation of N(7)-methylguanine at position 46 (m7G46) in tRNA. In Staphylococcus aureus (strain MSSA476), this protein is tRNA (guanine-N(7)-)-methyltransferase.